The following is a 350-amino-acid chain: Calcium uniporter protein, mitochondrial (350 aa).

Residues 1-49 constitute a mitochondrion transit peptide; sequence MAAAAGRSLLLLLCSRGGGGGAGGCGALTAGCFPGLGVSRHRPHQQHRT. At 50-232 the chain is on the mitochondrial matrix side; it reads AHQRPASWQS…ISRKAEKRTT (183 aa). Phosphoserine; by CaMK2 is present on residues serine 56 and serine 91. The segment at 74–164 is N-terminal MCU domain; sequence VTVVYQNGLP…LTYHVRPPKR (91 aa). Position 96 is an S-glutathionyl cysteine (cysteine 96). Residues 191–220 are a coiled coil; the sequence is IEQHQLNKERELVERLEDLKQQLAPLEKVR. Residues 233–256 traverse the membrane as a helical segment; the sequence is LVLWGGLAYMATQFGILARLTWWE. The Mitochondrial intermembrane segment spans residues 257–264; that stretch reads YSWDIMEP. Positions 259–267 match the Selectivity filter motif; that stretch reads WDIMEPVTY. Position 263 (glutamate 263) interacts with Ca(2+). Residues 265–282 traverse the membrane as a helical segment; it reads VTYFITYGSAMAMYAYFV. Topologically, residues 283 to 350 are mitochondrial matrix; it reads MTRQEYVYPE…LPLRQIGEKE (68 aa). Residues 284–289 are juxtamembrane helix; it reads TRQEYV. The stretch at 310–338 forms a coiled coil; that stretch reads RFDLEKYNQLKDAIAQAEMDLKRLRDPLQ. Lysine 331 carries the post-translational modification N6-acetyllysine.

Belongs to the MCU (TC 1.A.77) family. As to quaternary structure, homotetramer. Component of the uniplex complex, composed of MCU, EMRE/SMDT1, MICU1 and MICU2 (or MICU3) in a 4:4:1:1 stoichiometry. Interacts with CCDC109B/MCUB; this inhibits channel activity. Interacts with MCUR1. Interactions with MICU1 and MCUR1 are mutually exclusive. Interacts with SLC25A23. Phosphorylation by CaMK2 in heart leads to increased MCU current. The regulation of MCU by CaMK2 is however subject to discussion: another group was unable to reproduce these results. Phosphorylated on tyrosines by PTK2B/PYK2, promoting oligomerization. Post-translationally, glutathionylation at Cys-96 in response to reactive oxygen species (ROS) promotes MCU higher-order assembly, leading to constitutive activation of the MCU channel and mitochondrial calcium overload. In terms of processing, undergoes proteolytic degradation by SPG7. Detected in heart muscle (at protein level). Expressed in skeletal muscle, heart, kidney, liver, brain, lung, white fat and spleen.

It localises to the mitochondrion inner membrane. It carries out the reaction Ca(2+)(in) = Ca(2+)(out). With respect to regulation, MCU channel activity is regulated by the heterodimer composed of MICU1 and either MICU2 or MICU3, which act as calcium-sensors. At low calcium levels, MICU1 occludes the pore of the MCU channel, preventing mitochondrial calcium uptake. At higher calcium levels, calcium-binding to MICU1 and MICU2 (or MICU3) induces a conformational change that weakens MCU-MICU1 interactions and moves the MICU1-MICU2 heterodimer away from the pore, allowing calcium permeation through the channel. MCU channel activity is gated by EMRE/SMDT1 via the juxtamembrane helix loop. Inhibited by ruthenium red or its derivative Ru360. In terms of biological role, channel-forming and calcium-conducting subunit of the mitochondrial inner membrane calcium uniporter complex (uniplex), which mediates calcium uptake into the mitochondrial matrix. MCU channel activity is regulated by the calcium-sensor subunits of the uniplex MICU1 and MICU2 (or MICU3). Mitochondrial calcium homeostasis plays key roles in cellular physiology and regulates ATP production, cytoplasmic calcium signals and activation of cell death pathways. Involved in buffering the amplitude of systolic calcium rises in cardiomyocytes. While dispensable for baseline homeostatic cardiac function, acts as a key regulator of short-term mitochondrial calcium loading underlying a 'fight-or-flight' response during acute stress: acts by mediating a rapid increase of mitochondrial calcium in pacemaker cells. Participates in mitochondrial permeability transition during ischemia-reperfusion injury. Mitochondrial calcium uptake in skeletal muscle cells is involved in muscle size in adults. Regulates synaptic vesicle endocytosis kinetics in central nerve terminal. Regulates glucose-dependent insulin secretion in pancreatic beta-cells by regulating mitochondrial calcium uptake. Involved in antigen processing and presentation. The chain is Calcium uniporter protein, mitochondrial from Mus musculus (Mouse).